The following is a 101-amino-acid chain: Small ribosomal subunit protein uS14 (101 aa).

Residues 1 to 23 (MAKKSSVEKNKRRRKMVAQQAPK) are disordered.

Belongs to the universal ribosomal protein uS14 family. In terms of assembly, part of the 30S ribosomal subunit. Contacts proteins S3 and S10.

Binds 16S rRNA, required for the assembly of 30S particles and may also be responsible for determining the conformation of the 16S rRNA at the A site. In Rhodospirillum centenum (strain ATCC 51521 / SW), this protein is Small ribosomal subunit protein uS14.